The chain runs to 336 residues: Ornithine carbamoyltransferase, catabolic (336 aa).

Residues 57-60, Gln84, Arg108, and 136-139 each bind carbamoyl phosphate; these read STRT and HPTQ. L-ornithine-binding positions include Asn169, Asp233, and 237 to 238; that span reads SM. Residues 275-276 and Arg322 contribute to the carbamoyl phosphate site; that span reads CL.

Belongs to the aspartate/ornithine carbamoyltransferase superfamily. OTCase family.

The protein resides in the cytoplasm. It catalyses the reaction carbamoyl phosphate + L-ornithine = L-citrulline + phosphate + H(+). Its pathway is amino-acid degradation; L-arginine degradation via ADI pathway; carbamoyl phosphate from L-arginine: step 2/2. Functionally, reversibly catalyzes the transfer of the carbamoyl group from carbamoyl phosphate (CP) to the N(epsilon) atom of ornithine (ORN) to produce L-citrulline. The polypeptide is Ornithine carbamoyltransferase, catabolic (Chromobacterium violaceum (strain ATCC 12472 / DSM 30191 / JCM 1249 / CCUG 213 / NBRC 12614 / NCIMB 9131 / NCTC 9757 / MK)).